Consider the following 132-residue polypeptide: Ribosome-binding factor A (132 aa).

Belongs to the RbfA family. In terms of assembly, monomer. Binds 30S ribosomal subunits, but not 50S ribosomal subunits or 70S ribosomes.

Its subcellular location is the cytoplasm. Functionally, one of several proteins that assist in the late maturation steps of the functional core of the 30S ribosomal subunit. Associates with free 30S ribosomal subunits (but not with 30S subunits that are part of 70S ribosomes or polysomes). Required for efficient processing of 16S rRNA. May interact with the 5'-terminal helix region of 16S rRNA. The chain is Ribosome-binding factor A from Burkholderia cenocepacia (strain ATCC BAA-245 / DSM 16553 / LMG 16656 / NCTC 13227 / J2315 / CF5610) (Burkholderia cepacia (strain J2315)).